We begin with the raw amino-acid sequence, 559 residues long: Innexin-10 (559 aa).

4 helical membrane-spanning segments follow: residues 28–48 (YFTC…QFGG), 102–122 (QWVP…SLLW), 182–202 (FLWL…YLCT), and 283–303 (IFIL…GSFF). 2 disordered regions span residues 488–514 (EEKQ…YQNQ) and 527–559 (YRTP…STFK). Positions 503–514 (YTNQNPTPYQNQ) are enriched in low complexity. Over residues 528–559 (RTPSLSRGTDSRPVSTATDTDQTKKQSMSTFK) the composition is skewed to polar residues.

Belongs to the pannexin family.

The protein resides in the cell membrane. It localises to the cell junction. The protein localises to the gap junction. Functionally, structural component of the gap junctions. In Caenorhabditis elegans, this protein is Innexin-10 (inx-10).